Here is a 473-residue protein sequence, read N- to C-terminus: MTEPVVTRFAPSPTGFLHIGGARTALFNWLYARKQGGKMLLRIEDTDRERSTDAAIKAILDGLNWLGIEWDGEVIYQFSRAARHREVAEQLLAEGKAYRCYATPEELTKMREAARAEGRAVRYDGRWRDRDPSEAPADVKPVIRLKAPQTGETVIEDQVQGRVVWQNENLDDLVLLRSDGTPTYMLAVVVDDHDMGVTHVIRGDDHLINAARQKHIYDALGWTVPTMAHIPLIHGPDGSKLSKRHGALGVEAYRTMGYLPAALRNYLVRLGWSHGDQEIFSTSEMIEAFELSGIGRSAARFDFAKLENLNGHYMRASGDAELVKAFEDILQFLPQGPALQAKLNDTTRAQLLQAMPGLKERAKTLLELIDSAAYIFADRPLALDAKASAVLTPQVRALLGELRSSLANVTDWNAANTEAAMRAYAEKNNLKLGAVAQPLRAALTGRTTSPGIFDVLAVLGRDDALARLQDQAA.

Residues 11–21 carry the 'HIGH' region motif; that stretch reads PSPTGFLHIGG. Residues 240–244 carry the 'KMSKS' region motif; sequence KLSKR. K243 is an ATP binding site.

This sequence belongs to the class-I aminoacyl-tRNA synthetase family. Glutamate--tRNA ligase type 1 subfamily. As to quaternary structure, monomer.

It is found in the cytoplasm. It catalyses the reaction tRNA(Glu) + L-glutamate + ATP = L-glutamyl-tRNA(Glu) + AMP + diphosphate. Functionally, catalyzes the attachment of glutamate to tRNA(Glu) in a two-step reaction: glutamate is first activated by ATP to form Glu-AMP and then transferred to the acceptor end of tRNA(Glu). This Afipia carboxidovorans (strain ATCC 49405 / DSM 1227 / KCTC 32145 / OM5) (Oligotropha carboxidovorans) protein is Glutamate--tRNA ligase.